The sequence spans 165 residues: Putative universal stress protein SH1215 (165 aa).

The protein belongs to the universal stress protein A family.

Its subcellular location is the cytoplasm. This is Putative universal stress protein SH1215 from Staphylococcus haemolyticus (strain JCSC1435).